The sequence spans 184 residues: Large ribosomal subunit protein uL5c (184 aa).

Belongs to the universal ribosomal protein uL5 family. Part of the 50S ribosomal subunit; contacts the 5S rRNA.

It is found in the plastid. Its subcellular location is the chloroplast. Binds 5S rRNA, forms part of the central protuberance of the 50S subunit. The sequence is that of Large ribosomal subunit protein uL5c (rpl5) from Zygnema circumcarinatum (Green alga).